The sequence spans 296 residues: Phosphoribosylaminoimidazole-succinocarboxamide synthase (296 aa).

Belongs to the SAICAR synthetase family.

It catalyses the reaction 5-amino-1-(5-phospho-D-ribosyl)imidazole-4-carboxylate + L-aspartate + ATP = (2S)-2-[5-amino-1-(5-phospho-beta-D-ribosyl)imidazole-4-carboxamido]succinate + ADP + phosphate + 2 H(+). It functions in the pathway purine metabolism; IMP biosynthesis via de novo pathway; 5-amino-1-(5-phospho-D-ribosyl)imidazole-4-carboxamide from 5-amino-1-(5-phospho-D-ribosyl)imidazole-4-carboxylate: step 1/2. In Lachnospira eligens (strain ATCC 27750 / DSM 3376 / VPI C15-48 / C15-B4) (Eubacterium eligens), this protein is Phosphoribosylaminoimidazole-succinocarboxamide synthase.